Consider the following 248-residue polypeptide: Probable transcriptional regulatory protein Msil_2305 (248 aa).

Belongs to the TACO1 family.

The protein resides in the cytoplasm. The polypeptide is Probable transcriptional regulatory protein Msil_2305 (Methylocella silvestris (strain DSM 15510 / CIP 108128 / LMG 27833 / NCIMB 13906 / BL2)).